The following is a 404-amino-acid chain: MESWPWPSGGAWLLVPARALLQLLRADLRLGRPLLAALALLAALDWLCQRLLPPLAALAVLAATGWIVLSRLARPQRLPVATRAVLITGCDSGFGNATAKKLDTMGFTVLATVLDLNSPGALELRACCSSRLKLLQMDLTKPGDISRVLEFTKVHTPSTGLWGLVNNAGQNIFVADAELCPVATFRTCMEVNFFGALEMTKGLLPLLRRSSGRIVTVSSPAGDMPFPCLAAYGTSKAALALLMGNFSCELLPWGVKVSIIQPACFKTESVKDVHQWEERKQQLLATLPQELLQAYGEDYIEHLNGQFLHSLSQALPDLSPVVDAITDALLAAQPLRRYYPGHGLGLIYFIHYYLPEGLRQRFLQSFFISPYVPRALQAGQPGLTSARDIAQDQGPRPDPSPTAQ.

An NAD(+)-binding site is contributed by 82 to 111 (TRAVLITGCDSGFGNATAKKLDTMGFTVLA). Serine 219 serves as a coordination point for substrate. Residue tyrosine 232 is the Proton acceptor of the active site. Residues 383–404 (LTSARDIAQDQGPRPDPSPTAQ) form a disordered region.

This sequence belongs to the short-chain dehydrogenases/reductases (SDR) family. Interacts with ligand-free cytoplasmic NR3C2. Highly expressed in kidney, adrenal and colon; detected at lower levels on lung, liver, and spleen. Expressed in oocytes. Expressed in uterine tissues and in corpora lutea.

Its subcellular location is the microsome. It is found in the endoplasmic reticulum. The enzyme catalyses an 11beta-hydroxysteroid + NAD(+) = an 11-oxosteroid + NADH + H(+). It carries out the reaction corticosterone + NAD(+) = 11-dehydrocorticosterone + NADH + H(+). It catalyses the reaction cortisol + NAD(+) = cortisone + NADH + H(+). The catalysed reaction is 11beta,17beta-dihydroxyandrost-4-ene-3-one + NAD(+) = 17beta-hydroxyandrost-4-ene-3,11-dione + NADH + H(+). The enzyme catalyses 11beta-hydroxyandrost-4-ene-3,17-dione + NAD(+) = androst-4-ene-3,11,17-trione + NADH + H(+). It functions in the pathway steroid metabolism. Inhibited by glycyrrhetinic acid, carbenoloxone, 11-alpha-OH-progesterone and 11-beta-OH-progesterone. Functionally, catalyzes the conversion of biologically active 11beta-hydroxyglucocorticoids (11beta-hydroxysteroid) such as cortisol, to inactive 11-ketoglucocorticoids (11-oxosteroid) such as cortisone, in the presence of NAD(+). Functions as a dehydrogenase (oxidase), thereby decreasing the concentration of active glucocorticoids, thus protecting the nonselective mineralocorticoid receptor from occupation by glucocorticoids. Affinity towards corticosterone is higher than cortisol or dexamethasone. Plays an important role in maintaining glucocorticoids balance during preimplantation and protects the fetus from excessive maternal corticosterone exposure. Catalyzes the oxidation of 11beta-hydroxytestosterone (11beta,17beta-dihydroxyandrost-4-ene-3-one) to 11-ketotestosterone (17beta-hydroxyandrost-4-ene-3,11-dione), a major bioactive androgen. Catalyzes the conversion of 11beta-hydroxyandrostenedione (11beta-hydroxyandrost-4-ene-3,17-dione) to 11-ketoandrostenedione (androst-4-ene-3,11,17-trione), which can be further metabolized to 11-ketotestosterone. Converts 7-beta-25-dihydroxycholesterol to 7-oxo-25-hydroxycholesterol in vitro. 7-beta-25-dihydroxycholesterol (not 7-oxo-25-hydroxycholesterol) acts as ligand for the G-protein-coupled receptor (GPCR) Epstein-Barr virus-induced gene 2 (EBI2) and may thereby regulate immune cell migration. May protect ovulating oocytes and fertilizing spermatozoa from the adverse effects of cortisol. The chain is 11-beta-hydroxysteroid dehydrogenase type 2 (HSD11B2) from Bos taurus (Bovine).